Consider the following 85-residue polypeptide: uncharacterized protein (85 aa).

This is an uncharacterized protein from Acidithiobacillus ferrooxidans (Thiobacillus ferrooxidans).